A 473-amino-acid chain; its full sequence is Photosystem II CP43 reaction center protein (473 aa).

Residues 1 to 14 constitute a propeptide that is removed on maturation; sequence MKTLYSLRRFYPVE. Position 15 is an N-acetylthreonine (threonine 15). Position 15 is a phosphothreonine (threonine 15). A run of 5 helical transmembrane segments spans residues 69–93, 134–155, 178–200, 255–275, and 291–312; these read LFEVAHFVPEKPMYEQGLILLPHLA, LIGPETLEESFPFFGYVWKDRN, KALYFGGIYDTWAPGGGDVRKIT, KPFAWARRAFVWSGEAYLSYS, and WFNNTAYPSEFYGPTGPEASQA. Residue glutamate 367 coordinates [CaMn4O5] cluster. The chain crosses the membrane as a helical span at residues 447–471; it reads RARAAAAGFEKGIDRDFEPVLSMTP.

It belongs to the PsbB/PsbC family. PsbC subfamily. As to quaternary structure, PSII is composed of 1 copy each of membrane proteins PsbA, PsbB, PsbC, PsbD, PsbE, PsbF, PsbH, PsbI, PsbJ, PsbK, PsbL, PsbM, PsbT, PsbX, PsbY, PsbZ, Psb30/Ycf12, at least 3 peripheral proteins of the oxygen-evolving complex and a large number of cofactors. It forms dimeric complexes. Binds multiple chlorophylls and provides some of the ligands for the Ca-4Mn-5O cluster of the oxygen-evolving complex. It may also provide a ligand for a Cl- that is required for oxygen evolution. PSII binds additional chlorophylls, carotenoids and specific lipids. is required as a cofactor.

The protein resides in the plastid. The protein localises to the chloroplast thylakoid membrane. Its function is as follows. One of the components of the core complex of photosystem II (PSII). It binds chlorophyll and helps catalyze the primary light-induced photochemical processes of PSII. PSII is a light-driven water:plastoquinone oxidoreductase, using light energy to abstract electrons from H(2)O, generating O(2) and a proton gradient subsequently used for ATP formation. This is Photosystem II CP43 reaction center protein from Cryptomeria japonica (Japanese cedar).